Reading from the N-terminus, the 433-residue chain is MTERRHDREFVRTFFTSPTAVEGEDDSAKMLRRAAGLRGMQAPDVWVPDNEDATAPSMRDEGAENIVEVISEQGAEFPGEIHPRMVWHRDSPETRYQGFQHMLDITDPERGAVEHIHGFVIPEVGGIDDWKKADEFFTIVEHEHGLDEGSLAMSVIIESGEAELAMGDLRDEMGKPTNNLERLFLLVDGEVDYTKDMRAMTPTGELPAWPELRHNTSRGASAAGCVAVDGPYDDIRDVEGYRERMTDNQAKGMLGIWSLTPGQVVEANTSPLPPKTGSWLLDADGEEVELASEDGVEAYDGDRLSLEATDGGYELRVGGDARELTADELREELLGLTSYVPSMDDIVDSMEEFEAAKEAGRGAIAMTQSATLRIGGTEIDIEKDRMWDEATYQAAMTPISLFQDVYENRPDQHEELEERYGAGVVERAMEVGL.

16 to 17 (TS) serves as a coordination point for acetyl-CoA. Mg(2+) is bound at residue Asp52. Arg84 is a binding site for acetyl-CoA. Residues Arg84, Glu158, and 191 to 192 (VD) each bind glyoxylate. 2 residues coordinate Mg(2+): Glu158 and Asp192. Arg236 and Leu259 together coordinate acetyl-CoA. Residue Asp388 is the Proton acceptor of the active site.

It belongs to the HpcH/HpaI aldolase family. Homotrimer and homohexamer in equilibrium. It depends on Mg(2+) as a cofactor.

The protein resides in the cytoplasm. The catalysed reaction is glyoxylate + acetyl-CoA + H2O = (S)-malate + CoA + H(+). Its pathway is carbohydrate metabolism; glyoxylate cycle; (S)-malate from isocitrate: step 2/2. Involved in the glyoxylate cycle which synthesizes precursors for carbohydrates from C2 compounds such as acetate. Catalyzes the Claisen condensation between acetyl-coenzyme A (acetyl-CoA) and glyoxylate to form the malyl-CoA intermediate that is subsequently hydrolyzed to produce malate and CoA. The sequence is that of Malate synthase (aceB) from Haloferax volcanii (strain ATCC 29605 / DSM 3757 / JCM 8879 / NBRC 14742 / NCIMB 2012 / VKM B-1768 / DS2) (Halobacterium volcanii).